Reading from the N-terminus, the 222-residue chain is MKSHYIVLALASLTFLLCLPVSQSCNKALCASDVSKCLIQELCQCRPGEGNCPCCKECMLCLGALWDECCDCVGMCNPRNYSDTPPTSKSTVEELHEPIPSLFRALTEGDTQLNWNIVSFPVAEELSHHENLVSFLETVNQLHHQNVSVPSNNVHAPFPSDKERMCTVVYFDDCMSIHQCKISCESMGASKYRWFHNACCECIGPECIDYGSKTVKCMNCMF.

An N-terminal signal peptide occupies residues 1-24; sequence MKSHYIVLALASLTFLLCLPVSQS. N-linked (GlcNAc...) asparagine glycans are attached at residues asparagine 80 and asparagine 146.

This sequence belongs to the twisted gastrulation protein family. As to quaternary structure, interacts with CHRD and/or BMP4. This interaction enhances CHRD/BMP4 complex formation. Interacts with BMP7. In terms of tissue distribution, expressed in lymph node, liver, kidney, and lung. Expression in the kidney was stronger in the medulla than in the cortex, particularly in the cells surrounding the medullary tubules. Expressed in growth plate cartilage of long bones, ribs, and digits and to a lesser extent also in the resting zone of the epiphysis, trabecular bone, and vertebral cartilage. Expression seems to be absent from other skeletal tissues including muscle, skin, and fibroblasts.

Its subcellular location is the secreted. May be involved in dorsoventral axis formation. Seems to antagonize BMP signaling by forming ternary complexes with CHRD and BMPs, thereby preventing BMPs from binding to their receptors. In addition to the anti-BMP function, also has pro-BMP activity, partly mediated by cleavage and degradation of CHRD, which releases BMPs from ternary complexes. May be an important modulator of BMP-regulated cartilage development and chondrocyte differentiation. May play a role in thymocyte development. In Mus musculus (Mouse), this protein is Twisted gastrulation protein homolog 1 (Twsg1).